The sequence spans 346 residues: MDQYCILGRIGEGAHGIVFKAKHVETGEIVALKKVALRRLEDGIPNQALREIKALQEIEDSQYVVQLKAVFPHGAGFVLAFEFMLSDLAEVVRHAQRPLAPAQVKSYLQMLLKGVAFCHANNIVHRDLKPANLLISASGQLKIADFGLARVFSPDGGRLYTHQVATRWYRAPELLYGARQYDQGVDLWAVGCIMGELLNGSPLFPGENDIEQLCCVLRILGTPSPRVWPEITELPDYNKISFKEQAPVPLEEVLPDASHQALDLLGQFLLYPPRQRIAASQALLHQYFFTAPLPAHPSELPIPQRPGGPTPKAHPGPPHVHDFHVDRPLEESLLNPELIRPFIPEG.

Positions 4–288 constitute a Protein kinase domain; that stretch reads YCILGRIGEG…ASQALLHQYF (285 aa). ATP-binding positions include 10–18 and Lys33; that span reads IGEGAHGIV. Residue Asp127 is the Proton acceptor of the active site. Residues 298–324 form a disordered region; it reads SELPIPQRPGGPTPKAHPGPPHVHDFH. The segment covering 303–318 has biased composition (pro residues); that stretch reads PQRPGGPTPKAHPGPP.

This sequence belongs to the protein kinase superfamily. CMGC Ser/Thr protein kinase family. CDC2/CDKX subfamily. As to quaternary structure, monomer. Interacts with TBC1D32 and MAK.

It is found in the nucleus. It localises to the cytoplasm. The protein resides in the cell projection. Its subcellular location is the cilium. It carries out the reaction L-seryl-[protein] + ATP = O-phospho-L-seryl-[protein] + ADP + H(+). The catalysed reaction is L-threonyl-[protein] + ATP = O-phospho-L-threonyl-[protein] + ADP + H(+). Its function is as follows. Required for high-level Shh responses in the developing neural tube. Together with TBC1D32, controls the structure of the primary cilium by coordinating assembly of the ciliary membrane and axoneme, allowing GLI2 to be properly activated in response to SHH signaling. Involved in cell growth. Activates CDK2, a kinase involved in the control of the cell cycle, by phosphorylating residue 'Thr-160'. This is Cyclin-dependent kinase 20 (Cdk20) from Rattus norvegicus (Rat).